A 170-amino-acid chain; its full sequence is Photosystem II extrinsic protein V (170 aa).

Positions 1–33 (MASLFSTLQRSLKGLLILVPVLIGLVLASPAEA) are cleaved as a signal peptide. The heme c site is built by Cys70, Cys73, His74, and Met137.

The protein belongs to the cytochrome c family. PsbV subfamily. As to quaternary structure, PSII is composed of 1 copy each of membrane proteins PsbA, PsbB, PsbC, PsbD, PsbE, PsbF, PsbH, PsbI, PsbJ, PsbK, PsbL, PsbM, PsbT, PsbX, PsbY, PsbZ, Psb30/Ycf12, peripheral proteins PsbO, CyanoQ (PsbQ), PsbU, PsbV and a large number of cofactors. It forms dimeric complexes. Heme c serves as cofactor.

It localises to the cellular thylakoid membrane. Functionally, one of the extrinsic, lumenal subunits of photosystem II (PSII). PSII is a light-driven water plastoquinone oxidoreductase, using light energy to abstract electrons from H(2)O, generating a proton gradient subsequently used for ATP formation. The extrinsic proteins stabilize the structure of photosystem II oxygen-evolving complex (OEC), the ion environment of oxygen evolution and protect the OEC against heat-induced inactivation. Low-potential cytochrome c that plays a role in the OEC of PSII. The sequence is that of Photosystem II extrinsic protein V from Parasynechococcus marenigrum (strain WH8102).